Here is a 149-residue protein sequence, read N- to C-terminus: Transcriptional repressor NrdR (149 aa).

A zinc finger lies at 3–34 (CPFCFAVDTKVIDSRLVGEGSSVRRRRQCLVC). An ATP-cone domain is found at 49-139 (PRVIKSNDVR…VYRSFEDIKD (91 aa)).

The protein belongs to the NrdR family. It depends on Zn(2+) as a cofactor.

Negatively regulates transcription of bacterial ribonucleotide reductase nrd genes and operons by binding to NrdR-boxes. The protein is Transcriptional repressor NrdR of Salmonella schwarzengrund (strain CVM19633).